The sequence spans 299 residues: Zinc-alpha-2-glycoprotein (299 aa).

The signal sequence occupies residues 1-17 (MVPVLLALLLLLGPAVS). Residues Asn-24, Asn-125, and Asn-256 are each glycosylated (N-linked (GlcNAc...) asparagine). Cystine bridges form between Cys-120–Cys-183 and Cys-222–Cys-277. In terms of domain architecture, Ig-like C1-type spans 204-289 (PSVSVTGHAA…EHRSLTRPLT (86 aa)).

The protein belongs to the MHC class I family. In terms of assembly, interacts with PIP.

It localises to the secreted. Stimulates lipid degradation in adipocytes and causes the extensive fat losses associated with some advanced cancers. The chain is Zinc-alpha-2-glycoprotein (AZGP1) from Bos taurus (Bovine).